The sequence spans 887 residues: DNA mismatch repair protein MutS (887 aa).

621–628 (GPNMGGKS) lines the ATP pocket. The segment at 828-853 (AEPEPNKPAAAAKTKPASPQPDLFAS) is disordered. A compositionally biased stretch (low complexity) spans 834–848 (KPAAAAKTKPASPQP).

Belongs to the DNA mismatch repair MutS family.

Its function is as follows. This protein is involved in the repair of mismatches in DNA. It is possible that it carries out the mismatch recognition step. This protein has a weak ATPase activity. The protein is DNA mismatch repair protein MutS of Saccharophagus degradans (strain 2-40 / ATCC 43961 / DSM 17024).